The chain runs to 572 residues: Arginine--tRNA ligase (572 aa).

The short motif at Pro-122–His-132 is the 'HIGH' region element.

This sequence belongs to the class-I aminoacyl-tRNA synthetase family. As to quaternary structure, monomer.

It localises to the cytoplasm. It carries out the reaction tRNA(Arg) + L-arginine + ATP = L-arginyl-tRNA(Arg) + AMP + diphosphate. The sequence is that of Arginine--tRNA ligase from Neisseria gonorrhoeae (strain ATCC 700825 / FA 1090).